The chain runs to 463 residues: Glutathione amide reductase (463 aa).

Ni(2+)-binding residues include Thr2, Gln3, and His4. FAD is bound by residues 14–15 (SG), Glu34, and Thr41. Cys42 and Cys47 are disulfide-bonded. FAD contacts are provided by residues Lys50 and 113 to 114 (HA). Lys50 provides a ligand contact to NAD(+). NAD(+)-binding positions include 174–180 (AGYIGIE), 197–198 (LE), Val230, and Gly261. Residues Asp302 and 308–310 (QLT) contribute to the FAD site. The NAD(+) site is built by Gln308 and Val341. His437 provides a ligand contact to FAD. Catalysis depends on His437, which acts as the Proton acceptor.

The protein belongs to the class-I pyridine nucleotide-disulfide oxidoreductase family. In terms of assembly, homodimer. The cofactor is FAD.

It carries out the reaction 2 glutathione amide + NAD(+) = glutathione amide disulfide + NADH + H(+). Catalyzes the reduction of glutathione amide disulfide (GASSAG) to restore glutathione amide (GASH) in the presence of NADH. May play a role in GASH metabolism under anaerobic conditions as a sulfide carrier necessary for cytoplasmic sulfide oxidation. The sequence is that of Glutathione amide reductase from Marichromatium gracile (Chromatium gracile).